A 130-amino-acid polypeptide reads, in one-letter code: Small ribosomal subunit protein uS8 (130 aa).

Belongs to the universal ribosomal protein uS8 family. In terms of assembly, part of the 30S ribosomal subunit. Contacts proteins S5 and S12.

Its function is as follows. One of the primary rRNA binding proteins, it binds directly to 16S rRNA central domain where it helps coordinate assembly of the platform of the 30S subunit. This is Small ribosomal subunit protein uS8 from Photorhabdus laumondii subsp. laumondii (strain DSM 15139 / CIP 105565 / TT01) (Photorhabdus luminescens subsp. laumondii).